Consider the following 335-residue polypeptide: Fructose-1,6-bisphosphatase class 1 (335 aa).

4 residues coordinate Mg(2+): glutamate 90, aspartate 113, leucine 115, and aspartate 116. Substrate is bound by residues 116–119 (DGSS), asparagine 209, tyrosine 242, and lysine 272. Residue glutamate 278 participates in Mg(2+) binding.

The protein belongs to the FBPase class 1 family. As to quaternary structure, homotetramer. The cofactor is Mg(2+).

The protein resides in the cytoplasm. It carries out the reaction beta-D-fructose 1,6-bisphosphate + H2O = beta-D-fructose 6-phosphate + phosphate. It participates in carbohydrate biosynthesis; gluconeogenesis. This is Fructose-1,6-bisphosphatase class 1 from Mannheimia succiniciproducens (strain KCTC 0769BP / MBEL55E).